The following is a 754-amino-acid chain: Circadian input-output histidine kinase CikA (754 aa).

The interval 1 to 183 (MLAPSSNCSL…QVSAQIRLSL (183 aa)) is N-terminal domain, not required to complement the deletion strain. Residues 184–338 (DLSEILTTTI…RDILQHLAEH (155 aa)) form a GAF domain, required to complement the deletion strain region. Positions 390–611 (TMSHELRTPL…TFTVWIPEQT (222 aa)) constitute a Histidine kinase domain. At histidine 393 the chain carries Phosphohistidine; by autocatalysis. Residues 606–754 (WIPEQTLIEP…NLSEGDRPSS (149 aa)) form a psR domain, required to complement the deletion strain and for cell pole localization, attenuates autophosphorylation activity. Binds KaiB(fs) region. The region spanning 629–742 (HILLLEEEDE…LLLTTLQGLC (114 aa)) is the Response regulatory domain.

The protein in the N-terminal section; belongs to the phytochrome family. As to quaternary structure, homodimer. Part of the circadian clock (KaiA, KaiB, KaiC, CikA, RpaA, SasA), the composition of which varies during the circadian cycle. Interacts with LdpA. KaiA and CikA compete for binding to KaiB(fs).

It is found in the cytoplasm. Its subcellular location is the membrane. The catalysed reaction is ATP + protein L-histidine = ADP + protein N-phospho-L-histidine.. Functions in an input pathway to the Kai circadian clock. Senses oxidized quinones via its C-terminal pseudo-receiver domain, providing a link between cell metabolism and the clock. Affects the ratio of phosphorylated to unphosphorylated KaiC, binds quinones via its pseudo-receptor domain. Quinone-binding destabilizes the protein rapidly. Autophosphorylates, does not transfer the phosphate to its pseudo-receiver (PsR) domain. May play a role in cell division, as suggested by its polar location and increased cell length in a deletion strain. Its function is as follows. Member of the two-component regulatory system CikA/RpaA output pathway from the circadian clock, negatively regulating kaiBC expression independently of labA and of sasA. One of three clock output pathways. Dephosphorylates phospho-RpaA, enhanced by KaiB and KaiC, has only modest kinase activity on RpaA. A very robust clock is reconstituted with KaiA, KaiB, KaiC, SasA, CikA and RpaA; output is measured by transcription from an appropriate reporter. The sequence is that of Circadian input-output histidine kinase CikA from Synechococcus elongatus (strain ATCC 33912 / PCC 7942 / FACHB-805) (Anacystis nidulans R2).